We begin with the raw amino-acid sequence, 404 residues long: Beta-ketoacyl-[acyl-carrier-protein] synthase III, chloroplastic (404 aa).

Residues 1–43 constitute a chloroplast transit peptide; that stretch reads MANASGFFTHPSIPNLRSRIHVPVRVSGSGFCVSNRFSKRVLC. Catalysis depends on residues Cys-179, His-330, and Asn-360.

It belongs to the thiolase-like superfamily. FabH family.

It is found in the plastid. Its subcellular location is the chloroplast. It carries out the reaction malonyl-[ACP] + acetyl-CoA + H(+) = 3-oxobutanoyl-[ACP] + CO2 + CoA. It participates in lipid metabolism; fatty acid biosynthesis. In terms of biological role, catalyzes the condensation reaction of fatty acid synthesis by the addition to an acyl acceptor of two carbons from malonyl-ACP. KAS III catalyzes the first condensation reaction which initiates fatty acid synthesis and may therefore play a role in governing the total rate of fatty acid production. Possesses both acetoacetyl-ACP synthase and acetyl transacylase activities. The polypeptide is Beta-ketoacyl-[acyl-carrier-protein] synthase III, chloroplastic (Arabidopsis thaliana (Mouse-ear cress)).